We begin with the raw amino-acid sequence, 311 residues long: Forkhead box protein I2 (311 aa).

Positions 99-193 form a DNA-binding region, fork-head; it reads RPPYSYSALI…DNGNFRRKRR (95 aa). Disordered regions lie at residues 188–237 and 263–294; these read FRRK…TTTC and FSLR…QTGA. Positions 219-231 are enriched in low complexity; the sequence is STPQDPQTSPSPS.

It is found in the nucleus. Its function is as follows. Possible transcriptional activator. The polypeptide is Forkhead box protein I2 (Mus musculus (Mouse)).